The following is a 134-amino-acid chain: Large ribosomal subunit protein uL22 (134 aa).

The protein belongs to the universal ribosomal protein uL22 family. In terms of assembly, part of the 50S ribosomal subunit.

In terms of biological role, this protein binds specifically to 23S rRNA; its binding is stimulated by other ribosomal proteins, e.g. L4, L17, and L20. It is important during the early stages of 50S assembly. It makes multiple contacts with different domains of the 23S rRNA in the assembled 50S subunit and ribosome. The globular domain of the protein is located near the polypeptide exit tunnel on the outside of the subunit, while an extended beta-hairpin is found that lines the wall of the exit tunnel in the center of the 70S ribosome. The protein is Large ribosomal subunit protein uL22 of Rhodococcus jostii (strain RHA1).